The sequence spans 217 residues: Small ribosomal subunit protein uS3 (217 aa).

The region spanning 38–106 (IRKFINKELA…QVHINIIEIK (69 aa)) is the KH type-2 domain.

The protein belongs to the universal ribosomal protein uS3 family. As to quaternary structure, part of the 30S ribosomal subunit. Forms a tight complex with proteins S10 and S14.

In terms of biological role, binds the lower part of the 30S subunit head. Binds mRNA in the 70S ribosome, positioning it for translation. This Streptococcus equi subsp. equi (strain 4047) protein is Small ribosomal subunit protein uS3.